Consider the following 309-residue polypeptide: THO complex subunit Tho3 (309 aa).

WD repeat units follow at residues 22-61 (GQQG…FKFT), 65-107 (GNRG…PIAE), 109-148 (ESNY…IMET), 192-231 (AHNS…CERS), 234-273 (RMDY…QIWK), and 275-309 (PTNG…IFGL).

The protein belongs to the THOC3 family. As to quaternary structure, component of the transcription/export (TREX) complex, which is at least is formed of SUB2, TEX1 and YRA1 and the THO complex composed of HPR1, MFT1, THO2 and THP1.

The protein localises to the nucleus. Component of the TREX complex, which operates in coupling transcription elongation to mRNA export. The sequence is that of THO complex subunit Tho3 (THO3) from Schizosaccharomyces pombe (strain 972 / ATCC 24843) (Fission yeast).